A 266-amino-acid chain; its full sequence is Beta-lactamase OXA-19 (266 aa).

Positions 1–20 are cleaved as a signal peptide; the sequence is MKTFAAYVITACLSSTALAS. The active-site Acyl-ester intermediate is serine 67. Residue lysine 70 is modified to N6-carboxylysine. Substrate is bound at residue 205–207; it reads KTG.

It belongs to the class-D beta-lactamase family.

It catalyses the reaction a beta-lactam + H2O = a substituted beta-amino acid. In Pseudomonas aeruginosa, this protein is Beta-lactamase OXA-19 (bla).